A 688-amino-acid chain; its full sequence is Sodium channel and clathrin linker 1 (688 aa).

At A2 the chain carries N-acetylalanine. Residues 59–673 (LIAEYEKHLE…SASQQLSVIT (615 aa)) are a coiled coil. A Phosphoserine modification is found at S681.

Interacts with SCN10A and clathrin. Identified in a complex containing SCN10A, clathrin and SCLT1. Detected in small neurons in dorsal root ganglia. Detected in C-type fibers of sciatic nerve (at protein level).

The protein localises to the cytoplasm. It is found in the cytoskeleton. The protein resides in the microtubule organizing center. It localises to the centrosome. Its subcellular location is the centriole. Functionally, adapter protein that links SCN10A to clathrin. Regulates SCN10A channel activity, possibly by promoting channel internalization. This chain is Sodium channel and clathrin linker 1 (Sclt1), found in Rattus norvegicus (Rat).